The sequence spans 100 residues: Large ribosomal subunit protein uL23 (100 aa).

Belongs to the universal ribosomal protein uL23 family. In terms of assembly, part of the 50S ribosomal subunit. Contacts protein L29, and trigger factor when it is bound to the ribosome.

One of the early assembly proteins it binds 23S rRNA. One of the proteins that surrounds the polypeptide exit tunnel on the outside of the ribosome. Forms the main docking site for trigger factor binding to the ribosome. In Thermotoga sp. (strain RQ2), this protein is Large ribosomal subunit protein uL23.